The following is a 199-amino-acid chain: UPF0301 protein Vapar_4617 (199 aa).

The protein belongs to the UPF0301 (AlgH) family.

This chain is UPF0301 protein Vapar_4617, found in Variovorax paradoxus (strain S110).